Here is a 97-residue protein sequence, read N- to C-terminus: MSQDELDQIRAKIQDHLISSGNYELINKQLKLKLYENGWYDKVGQLATTELQQEDNKNLTFERLYAMVKPQAESMVPDEVRQEIMTRIREYLEDVIQ.

Belongs to the ENY2 family. In terms of assembly, component of the nuclear pore complex (NPC)-associated TREX-2 complex (transcription and export complex 2), composed of at least SUS1, SAC3, THP1, SEM1, and CDC31. TREX-2 contains 2 SUS1 chains. The TREX-2 complex interacts with the nucleoporin NUP1. Component of the 1.8 MDa SAGA transcription coactivator-HAT complex. SAGA is built of 5 distinct domains with specialized functions. Within the SAGA complex, SUS1, SGF11, SGF73 and UBP8 form an additional subcomplex of SAGA called the DUB module (deubiquitination module). Interacts directly with THP1, SAC3, SGF11, and with the RNA polymerase II.

The protein resides in the nucleus. It localises to the nucleoplasm. It is found in the cytoplasm. The protein localises to the P-body. In terms of biological role, involved in mRNA export coupled transcription activation by association with both the TREX-2 and the SAGA complexes. At the promoters, SAGA is required for recruitment of the basal transcription machinery. It influences RNA polymerase II transcriptional activity through different activities such as TBP interaction and promoter selectivity, interaction with transcription activators, and chromatin modification through histone acetylation and deubiquitination. Within the SAGA complex, participates in a subcomplex required for deubiquitination of H2B and for the maintenance of steady-state H3 methylation levels. The TREX-2 complex functions in docking export-competent ribonucleoprotein particles (mRNPs) to the nuclear entrance of the nuclear pore complex (nuclear basket). TREX-2 participates in mRNA export and accurate chromatin positioning in the nucleus by tethering genes to the nuclear periphery. May also be involved in cytoplasmic mRNA decay by interaction with components of P-bodies. This Meyerozyma guilliermondii (strain ATCC 6260 / CBS 566 / DSM 6381 / JCM 1539 / NBRC 10279 / NRRL Y-324) (Yeast) protein is Transcription and mRNA export factor SUS1.